The chain runs to 87 residues: Phosphoribosyl-ATP pyrophosphatase (87 aa).

It belongs to the PRA-PH family.

Its subcellular location is the cytoplasm. It catalyses the reaction 1-(5-phospho-beta-D-ribosyl)-ATP + H2O = 1-(5-phospho-beta-D-ribosyl)-5'-AMP + diphosphate + H(+). Its pathway is amino-acid biosynthesis; L-histidine biosynthesis; L-histidine from 5-phospho-alpha-D-ribose 1-diphosphate: step 2/9. This is Phosphoribosyl-ATP pyrophosphatase from Saccharopolyspora erythraea (strain ATCC 11635 / DSM 40517 / JCM 4748 / NBRC 13426 / NCIMB 8594 / NRRL 2338).